Reading from the N-terminus, the 107-residue chain is Nucleoid-associated protein Oant_0022 (107 aa).

It belongs to the YbaB/EbfC family. As to quaternary structure, homodimer.

It localises to the cytoplasm. Its subcellular location is the nucleoid. Binds to DNA and alters its conformation. May be involved in regulation of gene expression, nucleoid organization and DNA protection. This chain is Nucleoid-associated protein Oant_0022, found in Brucella anthropi (strain ATCC 49188 / DSM 6882 / CCUG 24695 / JCM 21032 / LMG 3331 / NBRC 15819 / NCTC 12168 / Alc 37) (Ochrobactrum anthropi).